The following is a 421-amino-acid chain: General transcription factor IIH subunit 2 (421 aa).

The disordered stretch occupies residues 1 to 26 (MSNQRKRSNDEREEEDDEDAEGIGEW). Over residues 11 to 24 (EREEEDDEDAEGIG) the composition is skewed to acidic residues. The 190-residue stretch at 83–272 (YLYIVIDFSR…IAEFAIANLI (190 aa)) folds into the VWFA domain. An RING-type zinc finger spans residues 362–408 (CFGCQQSLIGAGNKPVPCVTCRKCKHYFCLDCDIYIHESLHNCPGCE).

Belongs to the GTF2H2 family. In terms of assembly, component of the 7-subunit TFIIH core complex composed of XPB, XPD, TFB1/GTF2H1, GTF2H2/P44, TFB4/GTF2H3, TFB2/GTF2H4 and TFB5/GTF2H5, which is active in NER. The core complex associates with the 3-subunit CDK-activating kinase (CAK) module composed of CYCH1/cyclin H1, CDKD and MAT1/At4g30820 to form the 10-subunit holoenzyme (holo-TFIIH) active in transcription. Interacts with XPD.

The protein resides in the nucleus. Component of the general transcription and DNA repair factor IIH (TFIIH) core complex, which is involved in general and transcription-coupled nucleotide excision repair (NER) of damaged DNA and, when complexed to CAK, in RNA transcription by RNA polymerase II. In NER, TFIIH acts by opening DNA around the lesion to allow the excision of the damaged oligonucleotide and its replacement by a new DNA fragment. In transcription, TFIIH has an essential role in transcription initiation. When the pre-initiation complex (PIC) has been established, TFIIH is required for promoter opening and promoter escape. Phosphorylation of the C-terminal tail (CTD) of the largest subunit of RNA polymerase II by the kinase module CAK controls the initiation of transcription. Can restore UV resistance in the NER-deficient ssl1-1 yeast mutant. The chain is General transcription factor IIH subunit 2 from Arabidopsis thaliana (Mouse-ear cress).